Reading from the N-terminus, the 268-residue chain is Protein CDV3 homolog (268 aa).

Positions 40-50 (KREVVKPKKPE) are enriched in basic and acidic residues. Disordered stretches follow at residues 40–145 (KREV…ERVG) and 184–268 (QQAG…DEAS). The segment covering 51–61 (AAAGGVAVVGE) has biased composition (low complexity). Residues 76 to 85 (VEEEWKEFEE) are compositionally biased toward acidic residues. Polar residues predominate over residues 98–107 (QLSTITAQES). Acidic residues predominate over residues 123–132 (NYDEDDEDSN). Over residues 221-239 (RPEEQRKKKNEPAFEEVRH) the composition is skewed to basic and acidic residues.

This sequence belongs to the CDV3 family.

The polypeptide is Protein CDV3 homolog (Drosophila yakuba (Fruit fly)).